The following is a 348-amino-acid chain: MVSEAPPFWWQKAGWQAWLLSPFSLLYGKVAGRRMRTAKRANVPVPVICIGNFTVGGAGKTPTAIAIARAAVARGMKPGFLSRGYGGTLDVTTLVDAQHHRAAAVGDEPLLLAREAVTVISRRRVEGAHRLVKEGVNLIIMDDGFQSARLTLDYALVVIDTVRGIGNGHLVPGGPVRAPLAEQMRQMTGLLKVGKGHAADPLVRQAAKAAKPVFVAAIMPQEPEDFRGKRVLAFAGIADPAKFYRTVEALGGDIVLSRSFPDHHHFSDDEIDDLLKDARKENLQLVTTAKDAVRLNGHHGRAEELLWNSQVIEIDMVFDDPNAAGTVIETAVVNCRARLLRDNARSST.

54–61 (TVGGAGKT) contacts ATP.

It belongs to the LpxK family.

The enzyme catalyses a lipid A disaccharide + ATP = a lipid IVA + ADP + H(+). It functions in the pathway glycolipid biosynthesis; lipid IV(A) biosynthesis; lipid IV(A) from (3R)-3-hydroxytetradecanoyl-[acyl-carrier-protein] and UDP-N-acetyl-alpha-D-glucosamine: step 6/6. In terms of biological role, transfers the gamma-phosphate of ATP to the 4'-position of a tetraacyldisaccharide 1-phosphate intermediate (termed DS-1-P) to form tetraacyldisaccharide 1,4'-bis-phosphate (lipid IVA). The chain is Tetraacyldisaccharide 4'-kinase from Agrobacterium fabrum (strain C58 / ATCC 33970) (Agrobacterium tumefaciens (strain C58)).